Here is a 157-residue protein sequence, read N- to C-terminus: SsrA-binding protein (157 aa).

A disordered region spans residues 134–157 (HDKRESEKKRDWGREKGRLLRARG). Positions 135–151 (DKRESEKKRDWGREKGR) are enriched in basic and acidic residues.

The protein belongs to the SmpB family.

The protein resides in the cytoplasm. Required for rescue of stalled ribosomes mediated by trans-translation. Binds to transfer-messenger RNA (tmRNA), required for stable association of tmRNA with ribosomes. tmRNA and SmpB together mimic tRNA shape, replacing the anticodon stem-loop with SmpB. tmRNA is encoded by the ssrA gene; the 2 termini fold to resemble tRNA(Ala) and it encodes a 'tag peptide', a short internal open reading frame. During trans-translation Ala-aminoacylated tmRNA acts like a tRNA, entering the A-site of stalled ribosomes, displacing the stalled mRNA. The ribosome then switches to translate the ORF on the tmRNA; the nascent peptide is terminated with the 'tag peptide' encoded by the tmRNA and targeted for degradation. The ribosome is freed to recommence translation, which seems to be the essential function of trans-translation. In Nitrobacter hamburgensis (strain DSM 10229 / NCIMB 13809 / X14), this protein is SsrA-binding protein.